The following is a 434-amino-acid chain: MDYLDLGPYSSASGTVRLPGSKSISNRVLLLAALAEGETTITNLLDSDDTRVMLDALGKLGVKLARDGDTCVVTGTRGAFTAKTADLFLGNAGTAVRPLTAALAVNGGDYRVHGVPRMHERPIGDLVDGLRQIGAQIDYELSEGYPPLRIKPATISVDAPIRVRGDVSSQFLTALLMTLPLVKAKDGQAVVEVDGELISKPYVDITIRLMARFGVTVERDGWQRFVVPAGVRYRSPGRIMVEGDASSASYFLAAGALGGGPLRVEGVGRASIQGDVGFANALMQMGANVTMGDDWIDVRGIGHDHGKLEPIDMDFNLIPDAAMTIAVAALFANGTSTLRNIASWRVKETDRIAAMATELRKVGAIVEEGPDYLVVTPPEKLTPNAAIDTYDDHRMAMCFSLVSLGGVPVRINDPKCVGKTFPDYFDRFAALAKA.

Positions 22, 23, and 27 each coordinate 3-phosphoshikimate. Residue lysine 22 coordinates phosphoenolpyruvate. Glycine 93 and arginine 121 together coordinate phosphoenolpyruvate. Residues serine 168, serine 169, glutamine 170, serine 199, aspartate 320, and lysine 347 each coordinate 3-phosphoshikimate. Residue glutamine 170 coordinates phosphoenolpyruvate. The active-site Proton acceptor is the aspartate 320. Phosphoenolpyruvate is bound by residues arginine 351, arginine 394, and lysine 419.

It belongs to the EPSP synthase family. In terms of assembly, monomer.

It is found in the cytoplasm. It catalyses the reaction 3-phosphoshikimate + phosphoenolpyruvate = 5-O-(1-carboxyvinyl)-3-phosphoshikimate + phosphate. It functions in the pathway metabolic intermediate biosynthesis; chorismate biosynthesis; chorismate from D-erythrose 4-phosphate and phosphoenolpyruvate: step 6/7. Catalyzes the transfer of the enolpyruvyl moiety of phosphoenolpyruvate (PEP) to the 5-hydroxyl of shikimate-3-phosphate (S3P) to produce enolpyruvyl shikimate-3-phosphate and inorganic phosphate. The sequence is that of 3-phosphoshikimate 1-carboxyvinyltransferase from Burkholderia cenocepacia (strain HI2424).